The sequence spans 208 residues: ATP synthase subunit b (208 aa).

Residues 1–18 (MFVSTAFAQTATESQPAS) are compositionally biased toward polar residues. The segment at 1–26 (MFVSTAFAQTATESQPASTAGEHGAA) is disordered. A helical transmembrane segment spans residues 56–78 (SQVLWLAITFGLFYLFLSRVVLP).

The protein belongs to the ATPase B chain family. In terms of assembly, F-type ATPases have 2 components, F(1) - the catalytic core - and F(0) - the membrane proton channel. F(1) has five subunits: alpha(3), beta(3), gamma(1), delta(1), epsilon(1). F(0) has three main subunits: a(1), b(2) and c(10-14). The alpha and beta chains form an alternating ring which encloses part of the gamma chain. F(1) is attached to F(0) by a central stalk formed by the gamma and epsilon chains, while a peripheral stalk is formed by the delta and b chains.

It is found in the cell inner membrane. In terms of biological role, f(1)F(0) ATP synthase produces ATP from ADP in the presence of a proton or sodium gradient. F-type ATPases consist of two structural domains, F(1) containing the extramembraneous catalytic core and F(0) containing the membrane proton channel, linked together by a central stalk and a peripheral stalk. During catalysis, ATP synthesis in the catalytic domain of F(1) is coupled via a rotary mechanism of the central stalk subunits to proton translocation. Functionally, component of the F(0) channel, it forms part of the peripheral stalk, linking F(1) to F(0). This is ATP synthase subunit b from Brucella melitensis biotype 1 (strain ATCC 23456 / CCUG 17765 / NCTC 10094 / 16M).